The chain runs to 114 residues: Transmembrane protein 14C (114 aa).

Transmembrane regions (helical) follow at residues 8–28 (LMPL…GGII), 33–53 (AGSV…GLGA), 63–83 (VWVF…RFYN), and 89–109 (PAGL…ISLL).

Belongs to the TMEM14 family.

The protein resides in the mitochondrion membrane. Required for normal heme biosynthesis. This chain is Transmembrane protein 14C (Tmem14c), found in Mus musculus (Mouse).